The following is a 143-amino-acid chain: SLSATDKARVKALWDKIEGKSAELGAEALGRMLVSFPQTKIYFSEWGQDLGPQTPQVRNHGAVIMAAVGKAVKSIDNLVGGLSQLSELHAFKLRVDPANFKILAHNIILVISMYFPGDFTPEVHLSVDKFLACLALALSEKYR.

Ser1 is subject to N-acetylserine. A Globin domain is found at 1–143 (SLSATDKARV…LALALSEKYR (143 aa)). O2 is bound at residue His60. His89 lines the heme b pocket.

This sequence belongs to the globin family. In terms of assembly, heterotetramer of two alpha chains and two beta chains. Red blood cells.

Functionally, involved in oxygen transport from gills to the various peripheral tissues. In Leiostomus xanthurus (Spot), this protein is Hemoglobin subunit alpha (hba).